The primary structure comprises 229 residues: MAKKSKNLRAALEKIDSTKLYSVEEAVALAKKTNFAKFDASVEVAYNLNIDVRKADQQIRGAMVLPNGTGKTSRVLVFARGAKAEEAKAAGADFVGEDDLVAKINGGWLDFDVVIATPDMMAVVGRLGRVLGPRNLMPNPKTGTVTMDVAKAVEESKGGKITYRADKAGIVQALIGKVSFDADKLVENFKAFHDVMAKAKPATAKGTYMTSVSITTTQGVGIKVDPNSL.

This sequence belongs to the universal ribosomal protein uL1 family. In terms of assembly, part of the 50S ribosomal subunit.

Functionally, binds directly to 23S rRNA. The L1 stalk is quite mobile in the ribosome, and is involved in E site tRNA release. Its function is as follows. Protein L1 is also a translational repressor protein, it controls the translation of the L11 operon by binding to its mRNA. This is Large ribosomal subunit protein uL1 from Streptococcus suis (strain 98HAH33).